Here is a 164-residue protein sequence, read N- to C-terminus: Peptidyl-prolyl cis-trans isomerase A (164 aa).

The residue at position 1 (methionine 1) is an N-acetylmethionine. N-acetylvaline; in Peptidyl-prolyl cis-trans isomerase A, N-terminally processed is present on valine 2. Residues 7–163 (FFDIAVDGEP…KKITIANCGQ (157 aa)) enclose the PPIase cyclophilin-type domain. At lysine 28 the chain carries N6-acetyllysine; alternate. A Glycyl lysine isopeptide (Lys-Gly) (interchain with G-Cter in SUMO2); alternate cross-link involves residue lysine 28. Lysine 28 participates in a covalent cross-link: Glycyl lysine isopeptide (Lys-Gly) (interchain with G-Cter in ubiquitin); alternate. N6-acetyllysine is present on residues lysine 44 and lysine 76. At serine 77 the chain carries Phosphoserine. Residue lysine 82 is modified to N6-acetyllysine; alternate. Residue lysine 82 forms a Glycyl lysine isopeptide (Lys-Gly) (interchain with G-Cter in SUMO2); alternate linkage. At threonine 93 the chain carries Phosphothreonine. N-linked (GlcNAc...) asparagine glycosylation occurs at asparagine 108. Lysine 125 and lysine 133 each carry N6-acetyllysine.

The protein belongs to the cyclophilin-type PPIase family. PPIase A subfamily. As to quaternary structure, interacts with protein phosphatase PPP3CA/calcineurin A. Interacts with isoform 2 of BSG/CD147. Interacts with FOXO1; the interaction promotes FOXO1 dephosphorylation, nuclear accumulation and transcriptional activity. Interacts with integrin ITGA2B:ITGB3; the interaction is ROS and peptidyl-prolyl cis-trans isomerase (PPIase) activity-dependent and is increased in the presence of thrombin. Interacts with MAP3K5. Interacts with TARDBP; the interaction is dependent on the RNA-binding activity of TARDBP and the PPIase activity of PPIA/CYPA and the acetylation of PPIA/CYPA at Lys-125 favors the interaction. Interacts with HNRNPA1, HNRNPA2B1, HNRNPC, RBMX, HNRNPK and HNRNPM. Post-translationally, acetylation at Lys-125 markedly inhibits catalysis of cis to trans isomerization. PPIA acetylation also antagonizes the immunosuppressive effects of cyclosporine by inhibiting the sequential steps of cyclosporine binding and calcineurin inhibition. Acetylation at Lys-125 favors the interaction with TARDBP.

It is found in the cytoplasm. The protein resides in the secreted. The protein localises to the nucleus. The enzyme catalyses [protein]-peptidylproline (omega=180) = [protein]-peptidylproline (omega=0). Its activity is regulated as follows. Binds cyclosporin A (CsA). CsA mediates some of its effects via an inhibitory action on PPIase. Its function is as follows. Catalyzes the cis-trans isomerization of proline imidic peptide bonds in oligopeptides. Exerts a strong chemotactic effect on leukocytes partly through activation of one of its membrane receptors BSG/CD147, initiating a signaling cascade that culminates in MAPK/ERK activation. Activates endothelial cells (ECs) in a proinflammatory manner by stimulating activation of NF-kappa-B and ERK, JNK and p38 MAP-kinases and by inducing expression of adhesion molecules including SELE and VCAM1. Induces apoptosis in ECs by promoting the FOXO1-dependent expression of CCL2 and BCL2L11 which are involved in EC chemotaxis and apoptosis. In response to oxidative stress, initiates proapoptotic and antiapoptotic signaling in ECs via activation of NF-kappa-B and AKT1 and up-regulation of antiapoptotic protein BCL2. Negatively regulates MAP3K5/ASK1 kinase activity, autophosphorylation and oxidative stress-induced apoptosis mediated by MAP3K5/ASK1. Necessary for the assembly of TARDBP in heterogeneous nuclear ribonucleoprotein (hnRNP) complexes and regulates TARDBP binding to RNA UG repeats and TARDBP-dependent expression of HDAC6, ATG7 and VCP which are involved in clearance of protein aggregates. Plays an important role in platelet activation and aggregation. Regulates calcium mobilization and integrin ITGA2B:ITGB3 bidirectional signaling via increased ROS production as well as by facilitating the interaction between integrin and the cell cytoskeleton. Binds heparan sulfate glycosaminoglycans. This chain is Peptidyl-prolyl cis-trans isomerase A (PPIA), found in Oryctolagus cuniculus (Rabbit).